The primary structure comprises 37 residues: Large ribosomal subunit protein bL36c (37 aa).

This sequence belongs to the bacterial ribosomal protein bL36 family.

The protein resides in the plastid. The polypeptide is Large ribosomal subunit protein bL36c (rpl36) (Euglena longa (Euglenophycean alga)).